Consider the following 664-residue polypeptide: UvrABC system protein B (664 aa).

Residues 23-180 (EGLNRGMRFQ…ERLARIGYQR (158 aa)) enclose the Helicase ATP-binding domain. 36–43 (GVTGSGKT) is a binding site for ATP. The Beta-hairpin signature appears at 89 to 112 (YYDYYQPEAYIPTKDLYIEKNADI). The Helicase C-terminal domain maps to 429-588 (DLVNEIVKVK…ITPRSVIKPL (160 aa)). Residues 622-657 (EEYMAVLEEEMYRAASELRYEDAAALRDELFRIREE) form the UVR domain.

This sequence belongs to the UvrB family. Forms a heterotetramer with UvrA during the search for lesions. Interacts with UvrC in an incision complex.

Its subcellular location is the cytoplasm. In terms of biological role, the UvrABC repair system catalyzes the recognition and processing of DNA lesions. A damage recognition complex composed of 2 UvrA and 2 UvrB subunits scans DNA for abnormalities. Upon binding of the UvrA(2)B(2) complex to a putative damaged site, the DNA wraps around one UvrB monomer. DNA wrap is dependent on ATP binding by UvrB and probably causes local melting of the DNA helix, facilitating insertion of UvrB beta-hairpin between the DNA strands. Then UvrB probes one DNA strand for the presence of a lesion. If a lesion is found the UvrA subunits dissociate and the UvrB-DNA preincision complex is formed. This complex is subsequently bound by UvrC and the second UvrB is released. If no lesion is found, the DNA wraps around the other UvrB subunit that will check the other stand for damage. The chain is UvrABC system protein B from Thermotoga petrophila (strain ATCC BAA-488 / DSM 13995 / JCM 10881 / RKU-1).